Consider the following 241-residue polypeptide: Ureidoacrylate amidohydrolase RutB (241 aa).

The active-site Proton acceptor is the D38. K147 is a catalytic residue. Catalysis depends on C180, which acts as the Nucleophile.

The protein belongs to the isochorismatase family. RutB subfamily.

It catalyses the reaction (Z)-3-ureidoacrylate + H2O + H(+) = (Z)-3-aminoacrylate + NH4(+) + CO2. The catalysed reaction is (Z)-3-ureidoacrylate + H2O = (Z)-3-aminoacrylate + carbamate + H(+). The enzyme catalyses (Z)-2-methylureidoacrylate + H2O + H(+) = (Z)-2-methylaminoacrylate + NH4(+) + CO2. Its function is as follows. Hydrolyzes ureidoacrylate to form aminoacrylate and carbamate. The carbamate hydrolyzes spontaneously, thereby releasing one of the nitrogen atoms of the pyrimidine ring as ammonia and one of its carbon atoms as CO2. The protein is Ureidoacrylate amidohydrolase RutB of Haliangium ochraceum (strain DSM 14365 / JCM 11303 / SMP-2).